Here is a 259-residue protein sequence, read N- to C-terminus: Global transcriptional regulator CodY (259 aa).

Residues 1 to 155 form a GAF domain region; that stretch reads MALLQKTRII…GATVVGMEIL (155 aa). The H-T-H motif DNA-binding region spans 203 to 222; sequence ASKIADRVGITRSVIVNALR. At Ser-215 the chain carries Phosphoserine.

Belongs to the CodY family.

Its subcellular location is the cytoplasm. Its function is as follows. DNA-binding global transcriptional regulator which is involved in the adaptive response to starvation and acts by directly or indirectly controlling the expression of numerous genes in response to nutrient availability. During rapid exponential growth, CodY is highly active and represses genes whose products allow adaptation to nutrient depletion. The polypeptide is Global transcriptional regulator CodY (Bacillus pumilus (strain SAFR-032)).